The following is a 369-amino-acid chain: Outer membrane porin F (369 aa).

Positions 1 to 21 (MKRNILAVVIPALLVAGTANA) are cleaved as a signal peptide. A beta stranded transmembrane segment spans residues 22-27 (AEIFNK). A topological domain (periplasmic) is located at residue D28. A beta stranded membrane pass occupies residues 29 to 44 (GNKLDLYGKVDVRHQF). The Extracellular portion of the chain corresponds to 45 to 55 (ADKRSSEDGDD). A beta stranded membrane pass occupies residues 56 to 68 (SYARIGIKGETQI). At 69-70 (SD) the chain is on the periplasmic side. The chain crosses the membrane as a beta stranded span at residues 71–83 (QLTGFGRWEYNVK). Residues 84–97 (AKGTEAAVAESSTR) are Extracellular-facing. A beta stranded membrane pass occupies residues 98-106 (LAFAGLKFA). The Periplasmic segment spans residues 107–108 (NY). A beta stranded membrane pass occupies residues 109 to 115 (GSLDYGR). The Extracellular segment spans residues 116-150 (NYGVNYDVNAWTDVLPIFGGDAMAQTDNFMTGRST). The beta stranded transmembrane segment at 151–157 (GLLTYRN) threads the bilayer. Residues 158–165 (TDFFGLVD) are Periplasmic-facing. The chain crosses the membrane as a beta stranded span at residues 166-177 (GLNFALQYQGQN). The Extracellular segment spans residues 178 to 193 (SDRTKNKGRDTERSNG). A beta stranded transmembrane segment spans residues 194–204 (DGYGLSSTYDV). The Periplasmic segment spans residues 205 to 206 (GY). A beta stranded membrane pass occupies residues 207–219 (GITVGGSYANSAR). The Extracellular portion of the chain corresponds to 220 to 234 (TADQKEKVSDAYGKR). The chain crosses the membrane as a beta stranded span at residues 235–246 (AEAWNIGAKYDA). Position 247 (N247) is a topological domain, periplasmic. The beta stranded transmembrane segment at 248-259 (NVYLAAMYGETR) threads the bilayer. The Extracellular segment spans residues 260–278 (NMTRYTRTIADTDATLIAN). A beta stranded membrane pass occupies residues 279-291 (KTQNIELTAQYLF). Residues 292 to 294 (SDL) lie on the Periplasmic side of the membrane. Residues 295–308 (GLKPSLAYVQSKGK) traverse the membrane as a beta stranded segment. The Extracellular segment spans residues 309–320 (DLTEGKGFNGDL). The beta stranded transmembrane segment at 321–332 (VKYVSVGTYYYF) threads the bilayer. The Periplasmic portion of the chain corresponds to 333 to 334 (NK). The beta stranded transmembrane segment at 335–344 (NLSTYVDYKI) threads the bilayer. The Extracellular portion of the chain corresponds to 345 to 359 (NLLKKDNELGVNARN). Residues 360–369 (VFGVGLTYQF) form a beta stranded membrane-spanning segment.

Belongs to the Gram-negative porin family. As to quaternary structure, homotrimer.

The protein resides in the cell outer membrane. In terms of biological role, forms pores that allow passive diffusion of small molecules across the outer membrane. The polypeptide is Outer membrane porin F (ompF) (Xenorhabdus nematophila (strain ATCC 19061 / DSM 3370 / CCUG 14189 / LMG 1036 / NCIMB 9965 / AN6)).